The chain runs to 109 residues: FAD assembly factor SdhE (109 aa).

The interval 1–22 is disordered; that stretch reads MQDNFTASSPSSSSSASGVAED. A compositionally biased stretch (low complexity) spans 7–17; it reads ASSPSSSSSAS.

Belongs to the SdhE FAD assembly factor family.

It localises to the cytoplasm. In terms of biological role, an FAD assembly protein, which accelerates covalent attachment of the cofactor into other proteins. Plays an essential role in the assembly of succinate dehydrogenase (SDH, respiratory complex II), an enzyme complex that is a component of both the tricarboxylic acid cycle and the electron transport chain, and which couples the oxidation of succinate to fumarate with the reduction of ubiquinone (coenzyme Q) to ubiquinol. Required for flavinylation of SdhA, when the SDH operon and this gene are overexpressed in G.oxydans. Flavinylation of SdhA is detected only in the presence of sdhE. This chain is FAD assembly factor SdhE, found in Acetobacter pasteurianus (strain NBRC 105184 / IFO 3283-01).